A 474-amino-acid chain; its full sequence is Cytochrome c-552 (474 aa).

The first 29 residues, 1–29 (MSIKHWMASSVSVTALVMTALLNITAVSA), serve as a signal peptide directing secretion. Residue His-91 participates in heme c binding. Positions 119, 122, and 123 each coordinate heme. 6 residues coordinate heme c: Cys-157, Cys-160, His-161, Cys-206, Cys-209, and His-210. Ca(2+) is bound by residues Glu-212, Tyr-213, Lys-258, and Gln-260. Substrate is bound at residue Tyr-213. His-261 contacts substrate. Heme c-binding residues include His-272, Cys-279, Cys-282, His-283, His-298, Cys-311, Cys-314, His-315, and His-390.

It belongs to the cytochrome c-552 family. Requires Ca(2+) as cofactor. It depends on heme c as a cofactor.

The protein resides in the periplasm. The catalysed reaction is 6 Fe(III)-[cytochrome c] + NH4(+) + 2 H2O = 6 Fe(II)-[cytochrome c] + nitrite + 8 H(+). It participates in nitrogen metabolism; nitrate reduction (assimilation). Its function is as follows. Catalyzes the reduction of nitrite to ammonia, consuming six electrons in the process. The protein is Cytochrome c-552 of Vibrio vulnificus (strain CMCP6).